The chain runs to 147 residues: Putative toxin MJ0142 (147 aa).

The protein belongs to the UPF0332 family.

Functionally, putative toxin component of a putative type VII toxin-antitoxin (TA) system. Its cognate antitoxin might be MJ0141. In Methanocaldococcus jannaschii (strain ATCC 43067 / DSM 2661 / JAL-1 / JCM 10045 / NBRC 100440) (Methanococcus jannaschii), this protein is Putative toxin MJ0142.